The primary structure comprises 578 residues: tRNA (guanine(26)-N(2))-dimethyltransferase (578 aa).

Residues 18 to 451 (NVIRERNAEI…APPAVLWDIL (434 aa)) enclose the Trm1 methyltransferase domain. Residue Arg43 coordinates S-adenosyl-L-methionine. A disordered region spans residues 63-92 (EKALKKQRKKVKEQEDEKTTPVPEDPPVYE). Residues Arg113 and Asp131 each coordinate S-adenosyl-L-methionine. The Zn(2+) site is built by Cys295, Cys298, Cys335, and Cys338. The disordered stretch occupies residues 491–578 (EANPKSRKSA…PKQPKLEATA (88 aa)). Basic and acidic residues predominate over residues 564–578 (DVEHLPKQPKLEATA).

This sequence belongs to the class I-like SAM-binding methyltransferase superfamily. Trm1 family.

It carries out the reaction guanosine(26) in tRNA + 2 S-adenosyl-L-methionine = N(2)-dimethylguanosine(26) in tRNA + 2 S-adenosyl-L-homocysteine + 2 H(+). Its function is as follows. Dimethylates a single guanine residue at position 26 of most tRNAs using S-adenosyl-L-methionine as donor of the methyl groups. The polypeptide is tRNA (guanine(26)-N(2))-dimethyltransferase (Drosophila melanogaster (Fruit fly)).